Here is a 252-residue protein sequence, read N- to C-terminus: Imidazole glycerol phosphate synthase subunit HisF (252 aa).

Residues Asp-11 and Asp-130 contribute to the active site.

Belongs to the HisA/HisF family. As to quaternary structure, heterodimer of HisH and HisF.

Its subcellular location is the cytoplasm. It carries out the reaction 5-[(5-phospho-1-deoxy-D-ribulos-1-ylimino)methylamino]-1-(5-phospho-beta-D-ribosyl)imidazole-4-carboxamide + L-glutamine = D-erythro-1-(imidazol-4-yl)glycerol 3-phosphate + 5-amino-1-(5-phospho-beta-D-ribosyl)imidazole-4-carboxamide + L-glutamate + H(+). It functions in the pathway amino-acid biosynthesis; L-histidine biosynthesis; L-histidine from 5-phospho-alpha-D-ribose 1-diphosphate: step 5/9. IGPS catalyzes the conversion of PRFAR and glutamine to IGP, AICAR and glutamate. The HisF subunit catalyzes the cyclization activity that produces IGP and AICAR from PRFAR using the ammonia provided by the HisH subunit. This Geobacillus sp. (strain WCH70) protein is Imidazole glycerol phosphate synthase subunit HisF.